Consider the following 1150-residue polypeptide: Solute carrier family 12 member 6 (1150 aa).

The Cytoplasmic segment spans residues 1–135 (MHPPETTTKM…DEYFDKNLAL (135 aa)). The segment at 20-66 (TKIDDIPGLSDTSPDLSSRSSSRVRFSSRESVPETSRSEPMSEMSGA) is disordered. Residues 28–45 (LSDTSPDLSSRSSSRVRF) show a composition bias toward low complexity. S32 and S120 each carry phosphoserine. A discontinuously helical membrane pass occupies residues 136-158 (FEEEMDTRPKVSSLLNRMANYTN). Positions 147 and 148 each coordinate K(+). The residue at position 148 (S148) is a Phosphoserine. N151 is a chloride binding site. The Extracellular segment spans residues 159–165 (LTQGAKE). The interval 161–181 (QGAKEHEEAENITEGKKKPTK) is disordered. Basic and acidic residues predominate over residues 163–177 (AKEHEEAENITEGKK). The chain crosses the membrane as a helical span at residues 166–188 (HEEAENITEGKKKPTKTPQMGTF). Residues 189–211 (MGVYLPCLQNIFGVILFLRLTWV) are Cytoplasmic-facing. A helical transmembrane segment spans residues 212 to 245 (VGTAGVLQAFAIVLICCCCTMLTAISMSAIATNG). At 246–263 (VVPAGGSYFMISRALGPE) the chain is on the extracellular side. A run of 2 helical transmembrane segments spans residues 264–287 (FGGA…ILGA) and 288–316 (IEIF…AMLN). Residues 317–433 (NMRVYGTAFL…FVHNNVTSIQ (117 aa)) are Extracellular-facing. C375 and C390 are oxidised to a cystine. N-linked (GlcNAc...) asparagine glycosylation is found at N379, N398, N411, and N428. A disulfide bridge links C410 with C420. Residues 434 to 454 (GIPGLASGIITENLWSNYLPK) traverse the membrane as a helical segment. K(+) contacts are provided by I443, T444, and N446. Residues I443 and T444 each coordinate chloride. L447 and W448 together coordinate chloride. Over 455–464 (GEIIEKPSAK) the chain is Cytoplasmic. The helical transmembrane segment at 465-487 (SSDVLGSLNHEYVLVDITTSFTL) threads the bilayer. Over 488–518 (LVGIFFPSVTGIMAGSNRSGDLKDAQKSIPI) the chain is Extracellular. A helical membrane pass occupies residues 519-545 (GTILAILTTSFVYLSNVVLFGACIEGV). Residues 546 to 568 (VLRDKFGDAVKGNLVVGTLSWPS) lie on the Cytoplasmic side of the membrane. A run of 2 helical transmembrane segments spans residues 569–589 (PWVI…QSLT) and 590–612 (GAPR…VFGH). I603 contacts chloride. Over 613 to 629 (SKANGEPTWALLLTAAI) the chain is Cytoplasmic. The next 2 membrane-spanning stretches (helical) occupy residues 630-649 (AELG…LSMF) and 650-665 (FLMC…ALQT). Over 666–1150 (LLRTPNWRPR…GGSEVITIYS (485 aa)) the chain is Cytoplasmic. The segment at 682 to 691 (ALSFMGMSIC) is scissor helix. S736 is modified (phosphoserine). T778 carries the post-translational modification Phosphothreonine. S981 carries the post-translational modification Phosphoserine. T991 carries the post-translational modification Phosphothreonine; by OXSR1 and STK39. A phosphoserine mark is found at S1023, S1029, and S1032. A Phosphothreonine; by OXSR1 and STK39 modification is found at T1048. Y1121 is subject to Phosphotyrosine. Residues 1133-1150 (ERVLLVRGGGSEVITIYS) are interaction with CKB.

This sequence belongs to the SLC12A transporter family. K/Cl co-transporter subfamily. In terms of assembly, homodimer; adopts a domain-swap conformation at the scissor helices connecting the transmembrane domain and C-terminal domain. Heterodimer with K-Cl cotransporter SLC12A5. Interacts (via C-terminus) with CKB; the interaction may be required for potassium-chloride cotransport activity. In terms of processing, phosphorylated, phosphorylation regulates transporter activity. Phosphorylated at Thr-991 and Thr-1048 by OXSR1/OSR1 and STK39/SPAK downstream of WNK kinases (WNK1, WNK2, WNK3 or WNK4), inhibiting the potassium-chloride cotransport activity. N-glycosylated. Expressed in brain (at protein level). Highly expressed in heart, brain and kidney. Detected at lower levels in skeletal muscle, placenta, lung and pancreas. Detected in umbilical vein endothelial cells. In terms of tissue distribution, more abundant in kidney. As to expression, testis specific.

It is found in the cell membrane. It localises to the basolateral cell membrane. It carries out the reaction K(+)(in) + chloride(in) = K(+)(out) + chloride(out). Inhibited following phosphorylation by OXSR1/OSR1 and STK39/SPAK: phosphorylation takes place downstream of WNK kinases (WNK1, WNK2, WNK3 or WNK4) in response to hyperosmotic stress and subsequent cell shrinkage. Activated by N-ethylmaleimide (NEM). Inhibited by DIOA, bumetanide and furosemide. Mediates electroneutral potassium-chloride cotransport when activated by cell swelling. May contribute to cell volume homeostasis in single cells. Its function is as follows. Mediates electroneutral potassium-chloride cotransport when activated by cell swelling. May contribute to cell volume homeostasis in single cells. Functionally, mediates electroneutral potassium-chloride cotransport when activated by cell swelling. May contribute to cell volume homeostasis in single cells. This chain is Solute carrier family 12 member 6, found in Homo sapiens (Human).